Reading from the N-terminus, the 107-residue chain is UPF0145 protein LVIS_1527 (107 aa).

The protein belongs to the UPF0145 family.

The protein is UPF0145 protein LVIS_1527 of Levilactobacillus brevis (strain ATCC 367 / BCRC 12310 / CIP 105137 / JCM 1170 / LMG 11437 / NCIMB 947 / NCTC 947) (Lactobacillus brevis).